We begin with the raw amino-acid sequence, 103 residues long: MAAKIRQNDEVIVLAGKDKGKRGKVTQVLPNGKVIVEGVKIITKHEKPVPALGKEGGLVKKEAPIDASNVAIFNPKTNKADRVGFRFEDGKKVRFFKSNNEII.

Belongs to the universal ribosomal protein uL24 family. As to quaternary structure, part of the 50S ribosomal subunit.

Its function is as follows. One of two assembly initiator proteins, it binds directly to the 5'-end of the 23S rRNA, where it nucleates assembly of the 50S subunit. Functionally, one of the proteins that surrounds the polypeptide exit tunnel on the outside of the subunit. This chain is Large ribosomal subunit protein uL24, found in Actinobacillus succinogenes (strain ATCC 55618 / DSM 22257 / CCUG 43843 / 130Z).